A 544-amino-acid chain; its full sequence is MATNYIFVTGGVVSSLGKGIAAASLASILEARGLDVTIMKLDPYINVDPGTMSPTQHGEVFVTQDGAETDLDLGHYERFIRTKMTKANNFTSGKIYSEVLRKERRGDYLGATIQVIPHITNEIKARVIEGGKGHDVAIVEVGGTVGDIESLPFLEALRQLAVDVGREKTLFMHLTLVPYIPTAGEVKTKPTQHSVKELLSIGIQPDVLICRSDRMIPANERAKIALFCNVPERAVISLKDVDSIYRIPALLKSQGLDDFVCDRFRLTCKEADLSEWEQVLYQQANPTGEVTIGMVGKYVELPDAYKSVNEALKHAGLKNRLTVNVKYIDSQDVETKGVEVLQGVDAILVPGGFGYRGVEGKIRTAQYARENKIPYLGICLGMQIALIEYARNVAGLTQANSSEFDKHCPQPVVGLITEWQDESGNVETRSDESDLGGTMRLGAQQCHLIEGTKAREVYGTETIVERHRHRYEVNNTLLPQIEAAGLKVSGLSADRKLVEIIEVPNHPWFIAAQFHPEFTSTPRDGHPLFEGFVKAAKEHQGKNA.

The interval 1–266 (MATNYIFVTG…DDFVCDRFRL (266 aa)) is amidoligase domain. CTP is bound at residue S14. S14 lines the UTP pocket. ATP is bound by residues 15-20 (SLGKGI) and D72. Mg(2+) contacts are provided by D72 and E140. Residues 147–149 (DIE), 187–192 (KTKPTQ), and K223 each bind CTP. UTP contacts are provided by residues 187-192 (KTKPTQ) and K223. 239-241 (KDV) contacts ATP. The region spanning 291–542 (TIGMVGKYVE…VKAAKEHQGK (252 aa)) is the Glutamine amidotransferase type-1 domain. L-glutamine is bound at residue G352. The active-site Nucleophile; for glutamine hydrolysis is the C379. L-glutamine is bound by residues 380–383 (LGMQ), E403, and R470. Active-site residues include H515 and E517.

It belongs to the CTP synthase family. Homotetramer.

It catalyses the reaction UTP + L-glutamine + ATP + H2O = CTP + L-glutamate + ADP + phosphate + 2 H(+). The catalysed reaction is L-glutamine + H2O = L-glutamate + NH4(+). It carries out the reaction UTP + NH4(+) + ATP = CTP + ADP + phosphate + 2 H(+). The protein operates within pyrimidine metabolism; CTP biosynthesis via de novo pathway; CTP from UDP: step 2/2. Its activity is regulated as follows. Allosterically activated by GTP, when glutamine is the substrate; GTP has no effect on the reaction when ammonia is the substrate. The allosteric effector GTP functions by stabilizing the protein conformation that binds the tetrahedral intermediate(s) formed during glutamine hydrolysis. Inhibited by the product CTP, via allosteric rather than competitive inhibition. Its function is as follows. Catalyzes the ATP-dependent amination of UTP to CTP with either L-glutamine or ammonia as the source of nitrogen. Regulates intracellular CTP levels through interactions with the four ribonucleotide triphosphates. The chain is CTP synthase from Glaesserella parasuis serovar 5 (strain SH0165) (Haemophilus parasuis).